The primary structure comprises 365 residues: Anhydro-N-acetylmuramic acid kinase (365 aa).

Residue 9-16 (GTSLDGVD) coordinates ATP.

Belongs to the anhydro-N-acetylmuramic acid kinase family.

The catalysed reaction is 1,6-anhydro-N-acetyl-beta-muramate + ATP + H2O = N-acetyl-D-muramate 6-phosphate + ADP + H(+). The protein operates within amino-sugar metabolism; 1,6-anhydro-N-acetylmuramate degradation. It participates in cell wall biogenesis; peptidoglycan recycling. Its function is as follows. Catalyzes the specific phosphorylation of 1,6-anhydro-N-acetylmuramic acid (anhMurNAc) with the simultaneous cleavage of the 1,6-anhydro ring, generating MurNAc-6-P. Is required for the utilization of anhMurNAc either imported from the medium or derived from its own cell wall murein, and thus plays a role in cell wall recycling. The protein is Anhydro-N-acetylmuramic acid kinase of Zymomonas mobilis subsp. mobilis (strain ATCC 31821 / ZM4 / CP4).